Here is a 521-residue protein sequence, read N- to C-terminus: MSSLHNDKILILDFGAQYTQLIARRIREIGVYCEIWAWDHDPSEIAGFGAKGIILSGGPESTTLPGAPVAPQEVFDSGLPVFGICYGMQTLAAQLGGATEAADQREFGHAEVDVVAADALFSGLTDHAGASRLNVWMSHGDHVSQVPPGFTITAVTDRIPVAAMSNEDKRWYGVQFHPEVTHTLQGQTLLRRFVVDVCGCQTLWTAANIIDDQIARVREQVGDDEVILGLSGGVDSSVVAALLHKAIGDKLTCVFVDTGLLRWQEGDQVMAMFAEHMGVKVIRVNAADRYFAKLEGVSDPEAKRKIIGNLFVDIFDEESNKLANAKWLAQGTIYPDVIESAGSKTGKAHVIKSHHNVGGLPEHMKLGLVEPLRELFKDEVRRLGVELGLPRTMVYRHPFPGPGLGVRILGEVKREYAELLAKADAIFIDELRKADLYDKTSQAFAVFLPVKSVGVVGDARAYEWVIALRAVETIDFMTAHWAHLPYDFLGTVSNRIINELRGVSRVVYDISGKPPATIEWE.

The Glutamine amidotransferase type-1 domain occupies 8-203; sequence KILILDFGAQ…VVDVCGCQTL (196 aa). Cysteine 85 acts as the Nucleophile in catalysis. Catalysis depends on residues histidine 177 and glutamate 179. Residues 204-396 enclose the GMPS ATP-PPase domain; it reads WTAANIIDDQ…LGLPRTMVYR (193 aa). 231-237 contributes to the ATP binding site; the sequence is SGGVDSS.

Homodimer.

It carries out the reaction XMP + L-glutamine + ATP + H2O = GMP + L-glutamate + AMP + diphosphate + 2 H(+). Its pathway is purine metabolism; GMP biosynthesis; GMP from XMP (L-Gln route): step 1/1. Catalyzes the synthesis of GMP from XMP. The polypeptide is GMP synthase [glutamine-hydrolyzing] (Xanthomonas campestris pv. campestris (strain B100)).